Here is a 43-residue protein sequence, read N- to C-terminus: Protein PsbN (43 aa).

The helical transmembrane segment at threonine 5–phenylalanine 27 threads the bilayer.

The protein belongs to the PsbN family.

Its subcellular location is the plastid. The protein resides in the chloroplast thylakoid membrane. Its function is as follows. May play a role in photosystem I and II biogenesis. The chain is Protein PsbN from Drimys granadensis.